A 348-amino-acid chain; its full sequence is Holliday junction branch migration complex subunit RuvB (348 aa).

Residues 4–184 (TDRLIAASGR…FGIVQRLEFY (181 aa)) are large ATPase domain (RuvB-L). ATP-binding positions include Ile-23, Arg-24, Gly-65, Lys-68, Thr-69, Thr-70, 131 to 133 (EDF), Arg-174, Tyr-184, and Arg-221. Thr-69 provides a ligand contact to Mg(2+). Residues 185–255 (SNKDLATIVS…VADMALNLLD (71 aa)) form a small ATPAse domain (RuvB-S) region. The tract at residues 258-348 (ERGFDHSDRR…GGEYAAQDDE (91 aa)) is head domain (RuvB-H). DNA is bound by residues Arg-294, Arg-313, and Arg-318.

Belongs to the RuvB family. In terms of assembly, homohexamer. Forms an RuvA(8)-RuvB(12)-Holliday junction (HJ) complex. HJ DNA is sandwiched between 2 RuvA tetramers; dsDNA enters through RuvA and exits via RuvB. An RuvB hexamer assembles on each DNA strand where it exits the tetramer. Each RuvB hexamer is contacted by two RuvA subunits (via domain III) on 2 adjacent RuvB subunits; this complex drives branch migration. In the full resolvosome a probable DNA-RuvA(4)-RuvB(12)-RuvC(2) complex forms which resolves the HJ.

The protein resides in the cytoplasm. The catalysed reaction is ATP + H2O = ADP + phosphate + H(+). In terms of biological role, the RuvA-RuvB-RuvC complex processes Holliday junction (HJ) DNA during genetic recombination and DNA repair, while the RuvA-RuvB complex plays an important role in the rescue of blocked DNA replication forks via replication fork reversal (RFR). RuvA specifically binds to HJ cruciform DNA, conferring on it an open structure. The RuvB hexamer acts as an ATP-dependent pump, pulling dsDNA into and through the RuvAB complex. RuvB forms 2 homohexamers on either side of HJ DNA bound by 1 or 2 RuvA tetramers; 4 subunits per hexamer contact DNA at a time. Coordinated motions by a converter formed by DNA-disengaged RuvB subunits stimulates ATP hydrolysis and nucleotide exchange. Immobilization of the converter enables RuvB to convert the ATP-contained energy into a lever motion, pulling 2 nucleotides of DNA out of the RuvA tetramer per ATP hydrolyzed, thus driving DNA branch migration. The RuvB motors rotate together with the DNA substrate, which together with the progressing nucleotide cycle form the mechanistic basis for DNA recombination by continuous HJ branch migration. Branch migration allows RuvC to scan DNA until it finds its consensus sequence, where it cleaves and resolves cruciform DNA. In Pseudomonas entomophila (strain L48), this protein is Holliday junction branch migration complex subunit RuvB.